A 125-amino-acid polypeptide reads, in one-letter code: Small ribosomal subunit protein eS8 (125 aa).

The interval 1-34 is disordered; the sequence is MQWQGRSVRKSTGGRYSPSRGKRRREIGSAPAET.

Belongs to the eukaryotic ribosomal protein eS8 family. In terms of assembly, part of the 30S ribosomal subunit.

This Methanospirillum hungatei JF-1 (strain ATCC 27890 / DSM 864 / NBRC 100397 / JF-1) protein is Small ribosomal subunit protein eS8.